A 214-amino-acid chain; its full sequence is Thioredoxin-like 4, chloroplastic (214 aa).

The span at 1 to 20 (MITASLLPLPATSSSSGRRS) shows a compositional bias: low complexity. The interval 1-68 (MITASLLPLP…STNGSLPGLP (68 aa)) is disordered. The transit peptide at 1-71 (MITASLLPLP…GSLPGLPPVV (71 aa)) directs the protein to the chloroplast. A compositionally biased stretch (pro residues) spans 21–34 (LPPPTTTFPRPPPP). Over residues 42–53 (SSSSSSASSTES) the composition is skewed to low complexity. Residues 72–199 (VEEEEEEFCP…IIAAIQKYTA (128 aa)) enclose the Thioredoxin domain. Active-site nucleophile residues include cysteine 117 and cysteine 120. Cysteines 117 and 120 form a disulfide.

It belongs to the thioredoxin family.

Its subcellular location is the plastid. The protein resides in the chloroplast. Functionally, probable thiol-disulfide oxidoreductase that may participate in various redox reactions. The sequence is that of Thioredoxin-like 4, chloroplastic from Oryza sativa subsp. japonica (Rice).